The chain runs to 691 residues: Elongation factor G (691 aa).

The tr-type G domain occupies 8 to 283; the sequence is KKVRNIGIAA…AVVAYLPAPD (276 aa). GTP is bound by residues 17 to 24, 81 to 85, and 135 to 138; these read AHIDAGKT, DTPGH, and NKMD.

It belongs to the TRAFAC class translation factor GTPase superfamily. Classic translation factor GTPase family. EF-G/EF-2 subfamily.

It localises to the cytoplasm. Functionally, catalyzes the GTP-dependent ribosomal translocation step during translation elongation. During this step, the ribosome changes from the pre-translocational (PRE) to the post-translocational (POST) state as the newly formed A-site-bound peptidyl-tRNA and P-site-bound deacylated tRNA move to the P and E sites, respectively. Catalyzes the coordinated movement of the two tRNA molecules, the mRNA and conformational changes in the ribosome. This chain is Elongation factor G, found in Campylobacter jejuni subsp. jejuni serotype O:23/36 (strain 81-176).